Reading from the N-terminus, the 367-residue chain is MRLYFVLIFSVIFTTGNGKIQCKNMRGKSVDWFVVYKLPKLSGAGTSGKEFVYFDAESSDWTRGNDINDPNVAVGATVSQVYSADKSNNFWFMYSDDDPIKSADSYRGHAKGVSLFDSTTGFWLIHSVPNFPPIKSFSYPNTAEKYGQSFFCASMEVQHLTELAEHWKYIQATPYIINIPEKYATRFPTLKNVEAKQSLPRSATQFWISKPIKTVQGVTLMAYAKHKKFDGDIWNDLISRQNKVTLAVESWLNGSGDDIHTTCTSTSQTHDVTEMRVTGLNFASSKDHSKWAVSNSQTNPIVCFGDMNRQKSQLKRGGGALCIQNRNLWQLYHSFVIQVEPCKSSSHFSMFQTIATLLSAAGLVSKI.

An N-terminal signal peptide occupies residues 1–18 (MRLYFVLIFSVIFTTGNG). An N-linked (GlcNAc...) asparagine glycan is attached at Asn-253.

It belongs to the DNase II family.

In Caenorhabditis elegans, this protein is Cell-death-related nuclease 7 (crn-7).